The sequence spans 556 residues: MTWICFLAGLALLAIALGIAQHHLGTYMARVFTSDKDTRVETWCYRVMGVNPRAGQTWKSYARAVLAFSFCGVVFLYALQRLQPWLPWSLGKGSVNPAVSFNTAISFVTNTNWQAYSPEATLGHFVQLAGLCVQNFVSAATGIAIAVALIRGFVGHGEHTIGNFWVDLTRCTLRILMPIAAVAAFLLIAGGAVQNFTGFLHVTGVAGGNQVIPGGPVASQEAIKELGTNGGGFFNGNSSHPFENPQPWTNMLEIFLILLIPFSLPRTFGKMVEDVRQGRAILAAMVVLFTVNLCAMAAAEFSGHGTAARLAGAPMEGKEQRFGLAQSVLFANSTTMTSTGAVDSMHDSFTAIGGMFTLLNMMLGEISPGGVGSGLYGMLVIAVIAVFIAGLLVGRTPEYLGKKIGPREMKLSDLYILVMPTLVLCGVALSLAVPGLRSSVNTSIANPGEHGLSELVYAFTSAANNNGSAFAGLDASTNWLCAALGAAMLLGRFVPIILILALSGALVEREPVPVTAGTLPTHNALFTTLIVFTAILVTALVFFPVLTLGPLAEGLI.

10 helical membrane passes run 1–21 (MTWI…GIAQ), 60–80 (SYAR…YALQ), 130–150 (GLCV…VALI), 173–193 (LRIL…GGAV), 245–265 (PQPW…FSLP), 281–301 (ILAA…AAEF), 374–394 (GLYG…LLVG), 416–436 (ILVM…VPGL), 482–502 (AALG…ILAL), and 529–549 (LIVF…LTLG).

Belongs to the KdpA family. In terms of assembly, the system is composed of three essential subunits: KdpA, KdpB and KdpC.

The protein resides in the cell membrane. In terms of biological role, part of the high-affinity ATP-driven potassium transport (or Kdp) system, which catalyzes the hydrolysis of ATP coupled with the electrogenic transport of potassium into the cytoplasm. This subunit binds the extracellular potassium ions and delivers the ions to the membrane domain of KdpB through an intramembrane tunnel. In Cutibacterium acnes (strain DSM 16379 / KPA171202) (Propionibacterium acnes), this protein is Potassium-transporting ATPase potassium-binding subunit.